We begin with the raw amino-acid sequence, 76 residues long: Small proline-rich protein 2E (76 aa).

3 consecutive repeat copies span residues 21 to 29 (KKCPEPCPH), 30 to 38 (PQCPEPCPP), and 39 to 47 (PKCPEPCPE). The tract at residues 21–47 (KKCPEPCPHPQCPEPCPPPKCPEPCPE) is 3 X 9 AA approximate tandem repeats. The segment at 52-76 (PSYQQKCPPVQPPPPCQQKCPPKSK) is disordered.

It belongs to the cornifin (SPRR) family. Expressed in uterus.

It is found in the cytoplasm. Its function is as follows. Cross-linked envelope protein of keratinocytes. It is a keratinocyte protein that first appears in the cell cytosol, but ultimately becomes cross-linked to membrane proteins by transglutaminase. All that results in the formation of an insoluble envelope beneath the plasma membrane. This chain is Small proline-rich protein 2E (Sprr2e), found in Mus musculus (Mouse).